Here is a 208-residue protein sequence, read N- to C-terminus: Small ribosomal subunit protein uS4 (208 aa).

Residues 98–158 (RRLDNVVYRL…EKSRKIACIN (61 aa)) enclose the S4 RNA-binding domain.

The protein belongs to the universal ribosomal protein uS4 family. In terms of assembly, part of the 30S ribosomal subunit. Contacts protein S5. The interaction surface between S4 and S5 is involved in control of translational fidelity.

One of the primary rRNA binding proteins, it binds directly to 16S rRNA where it nucleates assembly of the body of the 30S subunit. Its function is as follows. With S5 and S12 plays an important role in translational accuracy. This is Small ribosomal subunit protein uS4 from Geobacter metallireducens (strain ATCC 53774 / DSM 7210 / GS-15).